Reading from the N-terminus, the 71-residue chain is General transcription and DNA repair factor IIH subunit TFB5 (71 aa).

This sequence belongs to the TFB5 family. Component of the 7-subunit TFIIH core complex.

It is found in the nucleus. The protein localises to the chromosome. Functionally, component of the general transcription and DNA repair factor IIH (TFIIH) core complex, which is involved in general and transcription-coupled nucleotide excision repair (NER) of damaged DNA and in RNA transcription by RNA polymerase II. In NER, TFIIH acts by opening DNA around the lesion to allow the excision of the damaged oligonucleotide and its replacement by a new DNA fragment. In transcription, TFIIH has an essential role in transcription initiation. When the pre-initiation complex (PIC) has been established, TFIIH is required for promoter opening and promoter escape. Necessary for the stability of the TFIIH complex and for the presence of normal levels of TFIIH in the cell. Required for efficient binding of TFIIH to damaged DNA. Dispensable for normal development, but required when transcription is challenged. This chain is General transcription and DNA repair factor IIH subunit TFB5, found in Caenorhabditis elegans.